The sequence spans 268 residues: Chymotrypsin-C (268 aa).

The first 16 residues, methionine 1–cysteine 16, serve as a signal peptide directing secretion. The propeptide at cysteine 17–arginine 29 is activation peptide. 5 disulfide bridges follow: cysteine 17–cysteine 141, cysteine 59–cysteine 75, cysteine 155–cysteine 222, cysteine 186–cysteine 202, and cysteine 212–cysteine 243. Asparagine 25 carries an N-linked (GlcNAc...) asparagine glycan. Residues valine 30 to glutamine 267 enclose the Peptidase S1 domain. Catalysis depends on histidine 74, which acts as the Charge relay system. The N-linked (GlcNAc...) asparagine glycan is linked to asparagine 90. Aspartate 121 acts as the Charge relay system in catalysis. Catalysis depends on serine 216, which acts as the Charge relay system.

The protein belongs to the peptidase S1 family. Elastase subfamily. Pancreas.

It catalyses the reaction Preferential cleavage: Leu-|-Xaa, Tyr-|-Xaa, Phe-|-Xaa, Met-|-Xaa, Trp-|-Xaa, Gln-|-Xaa, Asn-|-Xaa.. Regulates activation and degradation of trypsinogens and procarboxypeptidases by targeting specific cleavage sites within their zymogen precursors. Has chymotrypsin-type protease activity and hypocalcemic activity. Cleaves TRY4 and TRY5 and thereby inhibits their autoactivation. The polypeptide is Chymotrypsin-C (Ctrc) (Rattus norvegicus (Rat)).